We begin with the raw amino-acid sequence, 469 residues long: 3-isopropylmalate dehydratase large subunit (469 aa).

[4Fe-4S] cluster is bound by residues cysteine 347, cysteine 407, and cysteine 410.

Belongs to the aconitase/IPM isomerase family. LeuC type 1 subfamily. In terms of assembly, heterodimer of LeuC and LeuD. [4Fe-4S] cluster is required as a cofactor.

It carries out the reaction (2R,3S)-3-isopropylmalate = (2S)-2-isopropylmalate. It functions in the pathway amino-acid biosynthesis; L-leucine biosynthesis; L-leucine from 3-methyl-2-oxobutanoate: step 2/4. Functionally, catalyzes the isomerization between 2-isopropylmalate and 3-isopropylmalate, via the formation of 2-isopropylmaleate. In Prochlorococcus marinus (strain NATL2A), this protein is 3-isopropylmalate dehydratase large subunit.